Reading from the N-terminus, the 60-residue chain is Large ribosomal subunit protein bL32 (60 aa).

Residues Met1–Glu60 are disordered. A compositionally biased stretch (basic residues) spans Arg49–Glu60.

It belongs to the bacterial ribosomal protein bL32 family.

The sequence is that of Large ribosomal subunit protein bL32 from Bordetella avium (strain 197N).